A 245-amino-acid chain; its full sequence is MIIPAIDLIDGQVVRLYQGDYDKQTTFDLSPLAQLQSYQAQGAKLLHIVDLTGAKDPNKRQTKLIAELAAGLDVDIQVGGGIRSEDQVAELLAIGVKRVVIGSLAVKEPELVKSWFVKYGSDAICLALDVNINDNGDKIVAVSGWQSGGGKSLESLVAEFETVGLKHALVTDISRDGTLTGANTELYTELAATYPNILWQASGGIATLDNVAAVRDSKASGIIIGKALLINQFTVEEAIQCWPNA.

Asp7 serves as the catalytic Proton acceptor. Residue Asp129 is the Proton donor of the active site.

Belongs to the HisA/HisF family.

The protein localises to the cytoplasm. It catalyses the reaction 1-(5-phospho-beta-D-ribosyl)-5-[(5-phospho-beta-D-ribosylamino)methylideneamino]imidazole-4-carboxamide = 5-[(5-phospho-1-deoxy-D-ribulos-1-ylimino)methylamino]-1-(5-phospho-beta-D-ribosyl)imidazole-4-carboxamide. It functions in the pathway amino-acid biosynthesis; L-histidine biosynthesis; L-histidine from 5-phospho-alpha-D-ribose 1-diphosphate: step 4/9. The protein is 1-(5-phosphoribosyl)-5-[(5-phosphoribosylamino)methylideneamino] imidazole-4-carboxamide isomerase of Shewanella frigidimarina (strain NCIMB 400).